Here is a 1295-residue protein sequence, read N- to C-terminus: MLSPAKCESEEAQAPLDLHSSSRSEPECLSLVLWCPNPEEAAPSSTRELIKLPDNGEMSLRRSTTLNCNSPEENGGEGRVSQRKSSRGKSQPLLMLTNGCQLRRSPRFRALHANFDNVCSVPVTKGGVSQRKFSRGKSQPLLTLTNGCQLRRSPRFRAVDGNFDSVCSVPVTGKFGSRKRKSNSALDKKESSDSEGLTFKDIAVIAKSLEMEIISECQYKNNVAEGRSRLQDPAKRKVDSDTLLYSSINSSKQSLGSNKRMRRSQRFMKGTENEGEENLGKSKGKGMSLASCSFRRSTRLSGTVETGNTETLNRRKDCGPALCGAEQVRGTERLVQISKKDHCCEAMKKCEGDGLVSSKQELLVFPSGCIKKTVNGCRDRTLGKPRSSGLNTDDIHTSSLKISKNDTSNGLTMTTALVEQDAMESLLQGKTSACGAADKGKTREMHVNSTVIYLSDSDEPSSIEYLNGDNLTQVESGSALSSGGNEGIVSLDLNNPTKSTKRKGKRVTRTAVQEQNKRSICFFIGEPLSCEEAQERWRWRYELKERKSKSRGQQSEDDEDKIVANVECHYSQAKVDGHTFSLGDFAYIKGEEEETHVGQIVEFFKTTDGESYFRVQWFYRATDTIMERQATNHDKRRLFYSTVMNDNPVDCLISKVTVLQVSPRVGLKPNSIKSDYYFDMEYCVEYSTFQTLRNPKTSENKLECCADVVPTESTESILKKKSFSGELPVLDLYSGCGGMSTGLSLGAKISGVDVVTKWAVDQNTAACKSLKLNHPNTQVRNDAAGDFLQLLKEWDKLCKRYVFNNDQRTDTLRSVNSTKETSGSSSSSDDDSDSEEYEVEKLVDICFGDHDKTGKNGLKFKVHWKGYRSDEDTWELAEELSNCQDAIREFVTSGFKSKILPLPGRVGVICGGPPCQGISGYNRHRNVDSPLNDERNQQIIVFMDIVEYLKPSYVLMENVVDILRMDKGSLGRYALSRLVNMRYQARLGIMTAGCYGLSQFRSRVFMWGAVPNKNLPPFPLPTHDVIVRYGLPLEFERNVVAYAEGQPRKLEKALVLKDAISDLPHVSNDEDREKLPYESLPKTDFQRYIRSTKRDLTGSAIDNCNKRTMLLHDHRPFHINEDDYARVCQIPKRKGANFRDLPGLIVRNNTVCRDPSMEPVILPSGKPLVPGYVFTFQQGKSKRPFARLWWDETVPTVLTVPTCHSQALLHPEQDRVLTIRESARLQGFPDYFQFCGTIKERYCQIGNAVAVSVSRALGYSLGMAFRGLARDEHLIKLPQNFSHSTYPQLQETIPH.

Disordered stretches follow at residues 1-23, 61-91, and 249-287; these read MLSPAKCESEEAQAPLDLHSSSR, RRSTTLNCNSPEENGGEGRVSQRKSSRGKSQ, and NSSKQSLGSNKRMRRSQRFMKGTENEGEENLGKSKGKGM. Positions 61 to 72 are enriched in polar residues; the sequence is RRSTTLNCNSPE. The 116-residue stretch at 578–693 folds into the BAH domain; it reads HTFSLGDFAY…VEYSTFQTLR (116 aa). The 542-residue stretch at 727 to 1268 folds into the SAM-dependent MTase C5-type domain; sequence LPVLDLYSGC…YSLGMAFRGL (542 aa). Residues 814–835 are disordered; it reads SVNSTKETSGSSSSSDDDSDSE. The region spanning 837–902 is the Chromo domain; it reads YEVEKLVDIC…SGFKSKILPL (66 aa). Residue C915 is part of the active site.

It belongs to the class I-like SAM-binding methyltransferase superfamily. C5-methyltransferase family.

Its subcellular location is the nucleus. The enzyme catalyses a 2'-deoxycytidine in DNA + S-adenosyl-L-methionine = a 5-methyl-2'-deoxycytidine in DNA + S-adenosyl-L-homocysteine + H(+). In terms of biological role, may be involved in the CpXpG methylation and in gene silencing. This Arabidopsis thaliana (Mouse-ear cress) protein is DNA (cytosine-5)-methyltransferase CMT2 (CMT2).